A 616-amino-acid chain; its full sequence is MPKYRSATTTHGRNMAGARALWRATGMTDSDFGKPIIAVVNSFTQFVPGHVHLRDLGKLVAEQIEASGGVAKEFNTIAVDDGIAMGHGGMLYSLPSRELIADSVEYMVNAHCADAMVCISNCDKITPGMLMASLRLNIPVIFVSGGPMEAGKTKLSDKIIKLDLVDAMIQGADPKVSDDQSNQVERSACPTCGSCSGMFTANSMNCLTEALGLSQPGNGSLLATHADRKQLFLNAGKRIVELTKRYYEQNDESALPRNIASKAAFENAMTLDIAMGGSTNTVLHLLAAAQEAEIDFTMSDIDKLSRKVPQLCKVAPSTQKYHMEDVHRAGGVLGILGELDRAGLLNRNVKNVLGLTLPQTLEQYDITVTQDEAVKKMFRAGPAGIRTTQAFSQDCRWDSLDDDRAAGCIRSLEYAYSKDGGLAVLYGNFAENGCIVKTAGVDDSILKFTGPAKVYESQDDAVEAILGGKVVEGDVVVIRYEGPKGGPGMQEMLYPTSFLKSMGLGKACALITDGRFSGGTSGLSIGHVSPEAASGGTIALIEDGDTIAIDIPNRSIQLQLSEAEIAARREAQEARGDKAWTPKNRQRQVSFALRAYASLATSADKGAVRDKSKLGG.

Asp-81 contacts Mg(2+). Cys-122 is a [2Fe-2S] cluster binding site. Asp-123 and Lys-124 together coordinate Mg(2+). Lys-124 bears the N6-carboxylysine mark. Position 195 (Cys-195) interacts with [2Fe-2S] cluster. Glu-491 provides a ligand contact to Mg(2+). Ser-517 acts as the Proton acceptor in catalysis.

Belongs to the IlvD/Edd family. Homodimer. [2Fe-2S] cluster is required as a cofactor. It depends on Mg(2+) as a cofactor.

The catalysed reaction is (2R)-2,3-dihydroxy-3-methylbutanoate = 3-methyl-2-oxobutanoate + H2O. It carries out the reaction (2R,3R)-2,3-dihydroxy-3-methylpentanoate = (S)-3-methyl-2-oxopentanoate + H2O. The protein operates within amino-acid biosynthesis; L-isoleucine biosynthesis; L-isoleucine from 2-oxobutanoate: step 3/4. It participates in amino-acid biosynthesis; L-valine biosynthesis; L-valine from pyruvate: step 3/4. In terms of biological role, functions in the biosynthesis of branched-chain amino acids. Catalyzes the dehydration of (2R,3R)-2,3-dihydroxy-3-methylpentanoate (2,3-dihydroxy-3-methylvalerate) into 2-oxo-3-methylpentanoate (2-oxo-3-methylvalerate) and of (2R)-2,3-dihydroxy-3-methylbutanoate (2,3-dihydroxyisovalerate) into 2-oxo-3-methylbutanoate (2-oxoisovalerate), the penultimate precursor to L-isoleucine and L-valine, respectively. This is Dihydroxy-acid dehydratase from Salmonella agona (strain SL483).